A 483-amino-acid chain; its full sequence is MAQADIALIGLAVMGQNLILNMNDHGFVVCAFNRTVSKVDDFLAKEAKGTKVIGAKSLKDMVSKLKKPRRVILLVKAGQAVDDFIEKLVPLLDTGDIIIDGGNSEYRDTTRRCQDLKAKGILFVGSGVSGGEEGARYGPSLMPGGNKEAWPHIKTIFQAIAAKVGTGEPCCDWVGDEGAGHFVKMVHNGIEYGDMQLICEAYHLMKDVLGMRHEEMAQAFEDWNKTELDSFLIEITANILKFQDTDGKELLPKIRDSAGQKGTGKWTAISALEYGMPVTLIGEAVFARCLSSLKEERVQASRKLKGPKMVQLEGSKQAFLEDVRKALYASKIISYAQGFMLLRQAATEFGWTLNYGGIALMWRGGCIIRSVFLGKIKDAFERNPELQNLLLDDFFKSAVDDCQDSWRRVISTGVQAGIPMPCFTTALSFYDGYRHEMLPANLIQAQRDYFGAHTYELLSKPGEFIHTNWTGHGGSVSSSSYNA.

Residues 10 to 15 and 33 to 35 each bind NADP(+); these read GLAVMG and NRT. K38 is modified (N6-acetyllysine). S57 is modified (phosphoserine). At K59 the chain carries N6-acetyllysine. Residues 75–77 and N103 each bind NADP(+); that span reads VKA. Substrate contacts are provided by residues N103 and 129–131; that span reads SGG. S129 is subject to Phosphoserine. The Proton acceptor role is filled by K184. 187–188 contacts substrate; it reads HN. E191 (proton donor) is an active-site residue. Substrate is bound by residues Y192, K261, R288, R447, and H453. 478 to 481 lines the NADP(+) pocket; sequence SSSY.

Belongs to the 6-phosphogluconate dehydrogenase family. As to quaternary structure, homodimer.

It is found in the cytoplasm. It carries out the reaction 6-phospho-D-gluconate + NADP(+) = D-ribulose 5-phosphate + CO2 + NADPH. Its pathway is carbohydrate degradation; pentose phosphate pathway; D-ribulose 5-phosphate from D-glucose 6-phosphate (oxidative stage): step 3/3. Functionally, catalyzes the oxidative decarboxylation of 6-phosphogluconate to ribulose 5-phosphate and CO(2), with concomitant reduction of NADP to NADPH. The sequence is that of 6-phosphogluconate dehydrogenase, decarboxylating from Rattus norvegicus (Rat).